Here is a 236-residue protein sequence, read N- to C-terminus: Large ribosomal subunit protein uL3 (236 aa).

The segment covering 139–149 (SVSHRSHGSTG) has biased composition (low complexity). A disordered region spans residues 139-165 (SVSHRSHGSTGQRQDPGKVFKGKKMAG). Gln152 carries the N5-methylglutamine modification.

This sequence belongs to the universal ribosomal protein uL3 family. As to quaternary structure, part of the 50S ribosomal subunit. Forms a cluster with proteins L14 and L19. Methylated by PrmB.

Its function is as follows. One of the primary rRNA binding proteins, it binds directly near the 3'-end of the 23S rRNA, where it nucleates assembly of the 50S subunit. This chain is Large ribosomal subunit protein uL3, found in Pelagibacter ubique (strain HTCC1062).